Here is a 206-residue protein sequence, read N- to C-terminus: Large ribosomal subunit protein uL3 (206 aa).

A disordered region spans residues 127 to 151; sequence SGGPSSHGSKFHRHLGGTGQATTPA.

The protein belongs to the universal ribosomal protein uL3 family. As to quaternary structure, part of the 50S ribosomal subunit. Forms a cluster with proteins L14 and L19.

Functionally, one of the primary rRNA binding proteins, it binds directly near the 3'-end of the 23S rRNA, where it nucleates assembly of the 50S subunit. This Borrelia garinii subsp. bavariensis (strain ATCC BAA-2496 / DSM 23469 / PBi) (Borreliella bavariensis) protein is Large ribosomal subunit protein uL3.